The primary structure comprises 177 residues: KxDL motif-containing protein 1 (177 aa).

M1 bears the N-acetylmethionine mark. Residues 100 to 177 form a disordered region; sequence SHIPEGSFLE…TDDEEETHEE (78 aa). Polar residues predominate over residues 125 to 145; the sequence is ATSEQSTGSCDTSPDTVSPSL.

The protein belongs to the KXD1 family. In terms of assembly, component of the BLOC-one-related complex (BORC) which is composed of BLOC1S1, BLOC1S2, BORCS5, BORCS6, BORCS7, BORCS8, KXD1 and SNAPIN. Associates with the BLOC-1 complex. Interacts with BLOC1S1. Interacts with DTNBP1/BLOC1S7 (via coiled-coil domain). In terms of tissue distribution, widely expressed.

Its subcellular location is the lysosome membrane. As part of the BORC complex may play a role in lysosomes movement and localization at the cell periphery. Associated with the cytosolic face of lysosomes, the BORC complex may recruit ARL8B and couple lysosomes to microtubule plus-end-directed kinesin motor. May also be involved in the biogenesis of lysosome-related organelles such as melanosomes. This chain is KxDL motif-containing protein 1 (Kxd1), found in Mus musculus (Mouse).